Consider the following 465-residue polypeptide: Dihydrolipoyllysine-residue acetyltransferase component 5 of pyruvate dehydrogenase complex, chloroplastic (465 aa).

The N-terminal 31 residues, 1-31 (MSRLLQTPFLPSVSLPTKTRSSVTGFRVKPR), are a transit peptide targeting the chloroplast. The Lipoyl-binding domain maps to 39 to 114 (IREIFMPALS…PVGSAIALLA (76 aa)). At K80 the chain carries N6-lipoyllysine. Residues 123–148 (AKAKASGGGGGGDSKAPPASPPTAAV) are disordered. The segment covering 136–148 (SKAPPASPPTAAV) has biased composition (low complexity). The region spanning 184–221 (VASPYAKKLAKELKVELAGLVGSGPMGRIVAKDVEAVA) is the Peripheral subunit-binding (PSBD) domain. H438 is a catalytic residue.

Belongs to the 2-oxoacid dehydrogenase family. (R)-lipoate serves as cofactor.

It localises to the plastid. The protein resides in the chloroplast stroma. It carries out the reaction N(6)-[(R)-dihydrolipoyl]-L-lysyl-[protein] + acetyl-CoA = N(6)-[(R)-S(8)-acetyldihydrolipoyl]-L-lysyl-[protein] + CoA. Its function is as follows. The pyruvate dehydrogenase complex catalyzes the overall conversion of pyruvate to acetyl-CoA and CO(2). It contains multiple copies of three enzymatic components: pyruvate dehydrogenase (E1), dihydrolipoamide acetyltransferase (E2) and lipoamide dehydrogenase (E3). This chain is Dihydrolipoyllysine-residue acetyltransferase component 5 of pyruvate dehydrogenase complex, chloroplastic (EMB3003), found in Arabidopsis thaliana (Mouse-ear cress).